A 381-amino-acid polypeptide reads, in one-letter code: Alkanesulfonate monooxygenase (381 aa).

This sequence belongs to the SsuD family. As to quaternary structure, homotetramer.

It carries out the reaction an alkanesulfonate + FMNH2 + O2 = an aldehyde + FMN + sulfite + H2O + 2 H(+). In terms of biological role, catalyzes the desulfonation of aliphatic sulfonates. This chain is Alkanesulfonate monooxygenase, found in Escherichia coli (strain SE11).